The primary structure comprises 219 residues: Ribosomal RNA small subunit methyltransferase G (219 aa).

Residues glycine 85, leucine 90, 136–137 (VE), and arginine 151 each bind S-adenosyl-L-methionine.

This sequence belongs to the methyltransferase superfamily. RNA methyltransferase RsmG family.

It is found in the cytoplasm. The catalysed reaction is guanosine(527) in 16S rRNA + S-adenosyl-L-methionine = N(7)-methylguanosine(527) in 16S rRNA + S-adenosyl-L-homocysteine. Its function is as follows. Specifically methylates the N7 position of guanine in position 527 of 16S rRNA. The protein is Ribosomal RNA small subunit methyltransferase G of Cellvibrio japonicus (strain Ueda107) (Pseudomonas fluorescens subsp. cellulosa).